We begin with the raw amino-acid sequence, 523 residues long: Tubulin-specific chaperone E (523 aa).

In terms of domain architecture, CAP-Gly spans 31 to 75; that stretch reads GEVSGHMGSWLGIEWDDGLRGKHNGIVDGKRYFQTQTPTGGSFIR. 7 LRR repeats span residues 155-180, 181-204, 209-232, 235-258, 260-284, 285-310, and 315-337; these read LTHL…IAQQ, LPSL…QITE, FRQL…MHTA, WPNI…DRTK, FKQL…KLGN, LTTL…DSQE, and FVSL…AFNE.

It belongs to the TBCE family.

The protein localises to the cytoplasm. In terms of biological role, tubulin-folding protein which is required for the development of the neuronal microtubule network. Essential for the development and function of neuromuscular synapses. Likely to promote microtubule formation by acting in the negative regulation of the microtubule-severing protein spas. This Drosophila melanogaster (Fruit fly) protein is Tubulin-specific chaperone E.